Reading from the N-terminus, the 383-residue chain is uncharacterized protein (383 aa).

Positions 58-383 (GKGATRTQAR…RVGRRIRSSI (326 aa)) constitute a YcaO domain. A disordered region spans residues 80–100 (AERKPEDETFTAHPEDCDGLD).

This is an uncharacterized protein from Methanothermobacter thermautotrophicus (strain ATCC 29096 / DSM 1053 / JCM 10044 / NBRC 100330 / Delta H) (Methanobacterium thermoautotrophicum).